The following is a 306-amino-acid chain: LysM and putative peptidoglycan-binding domain-containing protein 3 (306 aa).

At 1-217 (MAGRHQNRSF…PYYGADWGIG (217 aa)) the chain is on the extracellular side. N-linked (GlcNAc...) asparagine glycosylation is present at N7. Position 55 is a phosphoserine (S55). The LysM domain occupies 65–109 (LTKDIQEGDTLNAIALQYCCTVADIKRVNNLISDQDFFALRSIKI). Residues 218–238 (WWTAVVIMLIVGIITPVFYLL) form a helical membrane-spanning segment. Over 239 to 306 (YYEILAKVDV…SQSPAAQQET (68 aa)) the chain is Cytoplasmic.

Its subcellular location is the cell membrane. The protein localises to the golgi apparatus. Essential for Golgi structural integrity. The chain is LysM and putative peptidoglycan-binding domain-containing protein 3 (LYSMD3) from Homo sapiens (Human).